The primary structure comprises 77 residues: Defensin-like protein 1 (77 aa).

The first 30 residues, 1–30 (MKLSVRFISAALLLFMVFIATGMGPVTVEA), serve as a signal peptide directing secretion. Intrachain disulfides connect cysteine 33–cysteine 77, cysteine 44–cysteine 64, cysteine 50–cysteine 71, and cysteine 54–cysteine 73.

Belongs to the DEFL family. In terms of tissue distribution, expressed in the whole plant except roots.

It is found in the secreted. Functionally, confers broad-spectrum resistance to pathogens. This Arabidopsis thaliana (Mouse-ear cress) protein is Defensin-like protein 1 (PDF2.3).